The following is a 226-amino-acid chain: Protein AhpA (226 aa).

2 consecutive transmembrane segments (helical) span residues 12 to 32 and 169 to 189; these read SMIS…LFGV and GELI…HYFL.

The protein belongs to the Smp family.

The protein resides in the cell inner membrane. In terms of biological role, when anaerobically expressed in wild-type E.coli K12 confers a hemolytic phenotype, but not in an sheA mutant. Suggests it affects the expression of the latent E.coli K12 hemolysin sheA under anaerobic conditions. This chain is Protein AhpA (ahpA), found in Pasteurella multocida (strain Pm70).